A 345-amino-acid chain; its full sequence is S-adenosylmethionine:tRNA ribosyltransferase-isomerase (345 aa).

The protein belongs to the QueA family. As to quaternary structure, monomer.

It localises to the cytoplasm. It carries out the reaction 7-aminomethyl-7-carbaguanosine(34) in tRNA + S-adenosyl-L-methionine = epoxyqueuosine(34) in tRNA + adenine + L-methionine + 2 H(+). It participates in tRNA modification; tRNA-queuosine biosynthesis. Functionally, transfers and isomerizes the ribose moiety from AdoMet to the 7-aminomethyl group of 7-deazaguanine (preQ1-tRNA) to give epoxyqueuosine (oQ-tRNA). The sequence is that of S-adenosylmethionine:tRNA ribosyltransferase-isomerase from Anaeromyxobacter sp. (strain Fw109-5).